Reading from the N-terminus, the 1014-residue chain is Calcium-transporting ATPase 2, plasma membrane-type (1014 aa).

An N-acetylmethionine modification is found at Met-1. Topologically, residues 1–160 are cytoplasmic; the sequence is MESYLNENFD…NKFAESEMRG (160 aa). The interaction with calmodulin stretch occupies residues 20 to 31; it reads VLEKWRNLCGVV. Phosphoserine; by CPK1 is present on Ser-45. A helical transmembrane segment spans residues 161 to 181; that stretch reads FWVFVWEALQDMTLMILGVCA. The Lumenal segment spans residues 182-199; sequence FVSLIVGIATEGWPKGSH. A helical membrane pass occupies residues 200–220; it reads DGLGIAASILLVVFVTATSDY. The Cytoplasmic portion of the chain corresponds to 221 to 348; that stretch reads RQSLQFRDLD…DDETPLQVKL (128 aa). Residues 349 to 368 form a helical membrane-spanning segment; it reads NGVATIIGKIGLFFAVVTFA. Over 369-398 the chain is Lumenal; that stretch reads VLVQGMFMRKLSTGTHWVWSGDEALELLEY. Residues 399-416 form a helical membrane-spanning segment; the sequence is FAIAVTIVVVAVPEGLPL. Over 417 to 810 the chain is Cytoplasmic; it reads AVTLSLAFAM…KWGRSVYINI (394 aa). The active-site 4-aspartylphosphate intermediate is Asp-454. Mg(2+) is bound by residues Asp-755 and Asp-759. The helical transmembrane segment at 811–829 threads the bilayer; that stretch reads QKFVQFQLTVNVVALVVNF. At 830-840 the chain is on the lumenal side; sequence SSACLTGSAPL. A helical membrane pass occupies residues 841–861; sequence TAVQLLWVNMIMDTLGALALA. Topologically, residues 862 to 881 are cytoplasmic; that stretch reads TEPPNDELMKRLPVGRRGNF. Residues 882–904 form a helical membrane-spanning segment; that stretch reads ITNAMWRNILGQAVYQFIVIWIL. Topologically, residues 905 to 916 are lumenal; that stretch reads QAKGKAMFGLDG. Residues 917 to 938 traverse the membrane as a helical segment; that stretch reads PDSTLMLNTLIFNCFVFCQVFN. At 939-956 the chain is on the cytoplasmic side; sequence EISSREMEEIDVFKGILD. The chain crosses the membrane as a helical span at residues 957–978; the sequence is NYVFVVVIGATVFFQIIIIEFL. Over 979 to 988 the chain is Lumenal; that stretch reads GTFASTTPLT. Residues 989–1010 traverse the membrane as a helical segment; it reads ITQWIFSIFIGFLGMPIAAGLK. The Cytoplasmic segment spans residues 1011–1014; that stretch reads TIPV.

Belongs to the cation transport ATPase (P-type) (TC 3.A.3) family. Type IIB subfamily.

The protein localises to the endoplasmic reticulum membrane. It catalyses the reaction Ca(2+)(in) + ATP + H2O = Ca(2+)(out) + ADP + phosphate + H(+). Its activity is regulated as follows. Activated by calmodulin. This magnesium-dependent enzyme catalyzes the hydrolysis of ATP coupled with the translocation of calcium from the cytosol into the endoplasmic reticulum. The sequence is that of Calcium-transporting ATPase 2, plasma membrane-type (ACA2) from Arabidopsis thaliana (Mouse-ear cress).